The primary structure comprises 505 residues: uncharacterized protein (505 aa).

Residue H431 is the Proton acceptor of the active site.

Belongs to the GMC oxidoreductase family. FAD is required as a cofactor.

This is an uncharacterized protein from Sinorhizobium fredii (strain NBRC 101917 / NGR234).